The sequence spans 192 residues: N-terminal acetyltransferase A complex catalytic subunit NAA10 (192 aa).

The region spanning 2–152 (VCIRRATVDD…DAYDMRKNLK (151 aa)) is the N-acetyltransferase domain.

The protein belongs to the acetyltransferase family. ARD1 subfamily. Part of the NatA complex. Interacts with NAA15. In terms of tissue distribution, expressed in leaves, roots, shoots and flowers.

The enzyme catalyses N-terminal glycyl-[protein] + acetyl-CoA = N-terminal N(alpha)-acetylglycyl-[protein] + CoA + H(+). It catalyses the reaction N-terminal L-alanyl-[protein] + acetyl-CoA = N-terminal N(alpha)-acetyl-L-alanyl-[protein] + CoA + H(+). The catalysed reaction is N-terminal L-seryl-[protein] + acetyl-CoA = N-terminal N(alpha)-acetyl-L-seryl-[protein] + CoA + H(+). It carries out the reaction N-terminal L-valyl-[protein] + acetyl-CoA = N-terminal N(alpha)-acetyl-L-valyl-[protein] + CoA + H(+). The enzyme catalyses N-terminal L-cysteinyl-[protein] + acetyl-CoA = N-terminal N(alpha)-acetyl-L-cysteinyl-[protein] + CoA + H(+). It catalyses the reaction N-terminal L-threonyl-[protein] + acetyl-CoA = N-terminal N(alpha)-acetyl-L-threonyl-[protein] + CoA + H(+). Functionally, catalytic subunit of the NatA N-alpha-acetyltransferase complex. Required for male gametocyte development, embryogenesis, suspensor development and the formation of the quiescent center (QC) in the root meristem. Involved in plant immunity through the regulation of SNC1 and RPM1 stability. The chain is N-terminal acetyltransferase A complex catalytic subunit NAA10 from Arabidopsis thaliana (Mouse-ear cress).